Here is a 299-residue protein sequence, read N- to C-terminus: Tyrosine recombinase XerC (299 aa).

A Core-binding (CB) domain is found at 1–85; the sequence is MEQHLDAYCM…AVRGFYKYLN (85 aa). A Tyr recombinase domain is found at 106–285; sequence RLPKTLDTDR…DFQHLATVYD (180 aa). Residues R146, K170, H237, R240, and H263 contribute to the active site. Residue Y272 is the O-(3'-phospho-DNA)-tyrosine intermediate of the active site.

This sequence belongs to the 'phage' integrase family. XerC subfamily. Forms a cyclic heterotetrameric complex composed of two molecules of XerC and two molecules of XerD.

It localises to the cytoplasm. Functionally, site-specific tyrosine recombinase, which acts by catalyzing the cutting and rejoining of the recombining DNA molecules. The XerC-XerD complex is essential to convert dimers of the bacterial chromosome into monomers to permit their segregation at cell division. It also contributes to the segregational stability of plasmids. The chain is Tyrosine recombinase XerC from Pseudomonas savastanoi pv. phaseolicola (strain 1448A / Race 6) (Pseudomonas syringae pv. phaseolicola (strain 1448A / Race 6)).